The sequence spans 569 residues: 2-succinyl-5-enolpyruvyl-6-hydroxy-3-cyclohexene-1-carboxylate synthase (569 aa).

The protein belongs to the TPP enzyme family. MenD subfamily. In terms of assembly, homodimer. Mg(2+) serves as cofactor. The cofactor is Mn(2+). Thiamine diphosphate is required as a cofactor.

It catalyses the reaction isochorismate + 2-oxoglutarate + H(+) = 5-enolpyruvoyl-6-hydroxy-2-succinyl-cyclohex-3-ene-1-carboxylate + CO2. The protein operates within quinol/quinone metabolism; 1,4-dihydroxy-2-naphthoate biosynthesis; 1,4-dihydroxy-2-naphthoate from chorismate: step 2/7. Its pathway is quinol/quinone metabolism; menaquinone biosynthesis. Functionally, catalyzes the thiamine diphosphate-dependent decarboxylation of 2-oxoglutarate and the subsequent addition of the resulting succinic semialdehyde-thiamine pyrophosphate anion to isochorismate to yield 2-succinyl-5-enolpyruvyl-6-hydroxy-3-cyclohexene-1-carboxylate (SEPHCHC). In Paenarthrobacter aurescens (strain TC1), this protein is 2-succinyl-5-enolpyruvyl-6-hydroxy-3-cyclohexene-1-carboxylate synthase.